A 416-amino-acid chain; its full sequence is CapZ-interacting protein (416 aa).

Disordered regions lie at residues 1 to 84 (MEER…KSSP) and 98 to 416 (AALL…DTKM). The span at 8 to 20 (TNANVDNSASPSV) shows a compositional bias: polar residues. Serine 17 is modified (phosphoserine). Residue serine 68 is modified to Phosphoserine; by MAPK8; in vitro. Serine 82 carries the phosphoserine modification. Serine 83 is subject to Phosphoserine; by MAPK8; in vitro. Serine 105 bears the Phosphoserine mark. A Phosphoserine; by MAPK12 and MAPK13 modification is found at serine 108. A phosphoserine mark is found at serine 116, serine 120, and serine 123. Position 124 is a phosphothreonine (threonine 124). Serine 126, serine 127, serine 135, and serine 143 each carry phosphoserine. Positions 159–176 (VRTRGSIKRRPPSRRFRR) are enriched in basic residues. Serine 177 carries the post-translational modification Phosphoserine. Serine 179 carries the phosphoserine; by MAPKAPK2 and MAPKAPK3 modification. Serine 216 carries the post-translational modification Phosphoserine; by MAPK8; in vitro. Residues 227-330 (GVRTLGPAEK…RVQNEEVGPE (104 aa)) form the RCSD domain. Residue serine 244 is modified to Phosphoserine; by MAPKAPK2 or MAPKAPK3; in vitro. Residues 244-273 (SRTEKQEEDRATEEAKNGEKARRSSEEVDG) are compositionally biased toward basic and acidic residues. A phosphoserine mark is found at serine 267, serine 268, serine 284, serine 298, and serine 333. Over residues 292–349 (AENRCGSPREEKPAGEEAEMEKATEVKGERVQNEEVGPEHDSQETKKLEEGAAVKETP) the composition is skewed to basic and acidic residues. Threonine 336 carries the post-translational modification Phosphothreonine. Serine 351 carries the post-translational modification Phosphoserine. Basic and acidic residues predominate over residues 360–372 (DVPKQEKGKEKQQ). A compositionally biased stretch (polar residues) spans 382 to 397 (SPQTGPAQLETSSEVQ).

In terms of assembly, interacts with CAPZA2 and CAPZB. Post-translationally, dephosphorylation results in its dissociation from CAPZA2. As to expression, highly expressed in skeletal muscle and more weakly in cardiac muscle. Also expressed in several lymphoid organs, including spleen, thymus, peripheral blood leukocytes, lymph node and bone marrow.

Stress-induced phosphorylation of CAPZIP may regulate the ability of F-actin-capping protein to remodel actin filament assembly. In Homo sapiens (Human), this protein is CapZ-interacting protein (RCSD1).